A 190-amino-acid chain; its full sequence is Elongation factor P-like protein (190 aa).

Belongs to the elongation factor P family.

This is Elongation factor P-like protein from Salmonella gallinarum (strain 287/91 / NCTC 13346).